The sequence spans 280 residues: RAD52 motif-containing protein 1 (280 aa).

The region spanning 18 to 101 (KTIFIWDIQP…SPLKVRLSTK (84 aa)) is the RRM domain.

In terms of assembly, homodimer.

The protein localises to the nucleus. It is found in the cytoplasm. Its subcellular location is the nucleolus. Functionally, may confer resistance to the antitumor agent cisplatin. Binds to DNA and RNA. The chain is RAD52 motif-containing protein 1 (rdm1) from Danio rerio (Zebrafish).